Reading from the N-terminus, the 216-residue chain is Translation initiation factor 6 (216 aa).

This sequence belongs to the eIF-6 family.

Its function is as follows. Binds to the 50S ribosomal subunit and prevents its association with the 30S ribosomal subunit to form the 70S initiation complex. This chain is Translation initiation factor 6, found in Thermoplasma acidophilum (strain ATCC 25905 / DSM 1728 / JCM 9062 / NBRC 15155 / AMRC-C165).